Consider the following 772-residue polypeptide: MGNCCSTFRAVFKPNEGSGGGIPLMPVRGGSTRRPDSLPKPPAAVVPSPPSPGDVPDAGVAPEVASVKEVDVLLAENGDAHRTRHYELMDREKEPRLVVRRGQPFAVSVTLSRPYNPDIDAISFVFTVEDAEKPSYGQGTLVAVPLLAKGAESGAAWNAVLDSSADDILRIQITPAADAIVGKWKMDIDTKLKNDGAVSYSYKDPFYILYNPWCRQDQVFLEGEELLQEYVLNDTGLIWRGSYNRLRPCVWKYAQFEKEILDCALYLVSKIGGVRPSECGDPVRVCRAISAAVNSPDDNGAVMGNWSNDYGGGTPPTKWIGSMKILQQFYKNKKPVKYGQCWVFAGVLTTVCRALGLPARTVTTYSAAHDTQNSLTVDYFVDDKGEIMEEMNSDSIWNFHVWTEVWMERPDLMPGDGAHYGGWQAVDSTPQELSDNMYRCGPAPVVAVKQGEVLRPYDSAYVFAEVNADKVFWRYSGPTQPLKLIRKDMLGIGQNISTKAVGRFQREDITNTYKYPEKSVEERAAMLKALRQSESLFSRYYLNEDFNDIHFNFELRDDIVIGSPFSVVVVMKNRSNQQDYTVTVLLRVDTVLYTGHVKDGVKKEKVERLIKAGAVEEVRIDVSYEDYYKHLVDQCAFNIACLATVHDTNYEYFAQDDFRVRKPDIKIKLEGEPVQGQEMSAVATLKNPLPIPVKKGQFLIEGPGIAKTQKIKLSQNIAPGEEASVNFKFTPKYDGRATIAAKFSSKELDDVDGFLNFMVEPKKEVNGTGNAA.

Residues Cys4 and Cys5 are each lipidated (S-palmitoyl cysteine). Residues 15–57 (NEGSGGGIPLMPVRGGSTRRPDSLPKPPAAVVPSPPSPGDVPD) form a disordered region. Residues 38–53 (LPKPPAAVVPSPPSPG) show a composition bias toward pro residues. Catalysis depends on residues His400 and Asp427. Ca(2+) contacts are provided by Asn467, Asp469, Glu517, and Glu522.

It belongs to the transglutaminase superfamily. Transglutaminase family. Ca(2+) is required as a cofactor. In terms of tissue distribution, has an annular, or ring-like expression pattern in epithelial annuli of developing limb segment boundary cells. In embryos, it is seen in gastrulating cells, in cells surrounding rapidly dividing neuroblasts, and in muscle pioneer cells invaginating to form apodemes.

It localises to the cell membrane. It catalyses the reaction L-glutaminyl-[protein] + L-lysyl-[protein] = [protein]-L-lysyl-N(6)-5-L-glutamyl-[protein] + NH4(+). Participates in morphogenetic activities of the cells, maybe by stabilizing the membrane or subcortical structures of cells that are under mechanical stress. Probably catalyzes the cross-linking of proteins and the conjugation of polyamines to proteins. This Schistocerca americana (American grasshopper) protein is Annulin.